The sequence spans 412 residues: CCA-adding enzyme (412 aa).

S41 and K44 together coordinate ATP. CTP is bound by residues S41 and K44. Mg(2+) contacts are provided by D53, D55, and D106. Residues H129, K149, and Y158 each coordinate ATP. H129, K149, and Y158 together coordinate CTP.

It belongs to the tRNA nucleotidyltransferase/poly(A) polymerase family. Archaeal CCA-adding enzyme subfamily. Homodimer. The cofactor is Mg(2+).

The enzyme catalyses a tRNA precursor + 2 CTP + ATP = a tRNA with a 3' CCA end + 3 diphosphate. It catalyses the reaction a tRNA with a 3' CCA end + 2 CTP + ATP = a tRNA with a 3' CCACCA end + 3 diphosphate. Functionally, catalyzes the addition and repair of the essential 3'-terminal CCA sequence in tRNAs without using a nucleic acid template. Adds these three nucleotides in the order of C, C, and A to the tRNA nucleotide-73, using CTP and ATP as substrates and producing inorganic pyrophosphate. tRNA 3'-terminal CCA addition is required both for tRNA processing and repair. Also involved in tRNA surveillance by mediating tandem CCA addition to generate a CCACCA at the 3' terminus of unstable tRNAs. While stable tRNAs receive only 3'-terminal CCA, unstable tRNAs are marked with CCACCA and rapidly degraded. The sequence is that of CCA-adding enzyme from Saccharolobus islandicus (strain Y.G.57.14 / Yellowstone #1) (Sulfolobus islandicus).